The primary structure comprises 370 residues: GTPase Obg (370 aa).

One can recognise an Obg domain in the interval 1-159 (MKFIDEARIE…RMLKLELKVL (159 aa)). The disordered stretch occupies residues 128-147 (LHFKSSTNRAPRQKTDGKPG). An OBG-type G domain is found at 160 to 334 (ADVGLLGMPN…LCYAIYDYLS (175 aa)). Residues 166-173 (GMPNAGKS), 191-195 (FTTLA), 213-216 (DIPG), 284-287 (NKLD), and 315-317 (SAL) contribute to the GTP site. The Mg(2+) site is built by Ser-173 and Thr-193.

This sequence belongs to the TRAFAC class OBG-HflX-like GTPase superfamily. OBG GTPase family. Monomer. The cofactor is Mg(2+).

It localises to the cytoplasm. In terms of biological role, an essential GTPase which binds GTP, GDP and possibly (p)ppGpp with moderate affinity, with high nucleotide exchange rates and a fairly low GTP hydrolysis rate. Plays a role in control of the cell cycle, stress response, ribosome biogenesis and in those bacteria that undergo differentiation, in morphogenesis control. This is GTPase Obg from Burkholderia orbicola (strain MC0-3).